Reading from the N-terminus, the 127-residue chain is Large ribosomal subunit protein uL22 (127 aa).

This sequence belongs to the universal ribosomal protein uL22 family. As to quaternary structure, part of the 50S ribosomal subunit.

Its function is as follows. This protein binds specifically to 23S rRNA; its binding is stimulated by other ribosomal proteins, e.g. L4, L17, and L20. It is important during the early stages of 50S assembly. It makes multiple contacts with different domains of the 23S rRNA in the assembled 50S subunit and ribosome. In terms of biological role, the globular domain of the protein is located near the polypeptide exit tunnel on the outside of the subunit, while an extended beta-hairpin is found that lines the wall of the exit tunnel in the center of the 70S ribosome. In Methylobacterium nodulans (strain LMG 21967 / CNCM I-2342 / ORS 2060), this protein is Large ribosomal subunit protein uL22.